Reading from the N-terminus, the 410-residue chain is Putative competence-damage inducible protein (410 aa).

Belongs to the CinA family.

The sequence is that of Putative competence-damage inducible protein from Clostridium kluyveri (strain NBRC 12016).